A 359-amino-acid chain; its full sequence is Protein-arginine kinase (359 aa).

One can recognise a Phosphagen kinase C-terminal domain in the interval 25 to 257 (IVISSRVRLA…QQVIEQERML (233 aa)). ATP-binding positions include 28-32 (SSRVR), His-93, Arg-128, 179-183 (RASLM), and 210-215 (RGIYGE). The RDXXRA motif of the pArg binding pocket involved in allosteric regulation signature appears at 340-345 (RDAKRA).

Belongs to the ATP:guanido phosphotransferase family.

The enzyme catalyses L-arginyl-[protein] + ATP = N(omega)-phospho-L-arginyl-[protein] + ADP + H(+). Its activity is regulated as follows. Appears to be allosterically activated by the binding of pArg-containing polypeptides to the pArg-binding pocket localized in the C-terminal domain of McsB. Its function is as follows. Catalyzes the specific phosphorylation of arginine residues in proteins. In Syntrophomonas wolfei subsp. wolfei (strain DSM 2245B / Goettingen), this protein is Protein-arginine kinase.